The following is an 886-amino-acid chain: Envelope glycoprotein GP350 (886 aa).

The Virion surface segment spans residues 1–839 (MEAALLVCQY…TSQPRFSNLS (839 aa)). N-linked (GlcNAc...) asparagine; by host glycans are attached at residues N47, N87, N114, N166, N169, N195, N229, N277, N318, N328, N345, N356, N378, N386, N411, N435, N443, N457, N497, N519, N533, N554, N568, N589, N603, N606, N624, and N635. Residues 423–810 (KAPESTTTSP…PSTSSKLRPR (388 aa)) form a disordered region. Residues 428–437 (TTTSPTLNTT) are compositionally biased toward low complexity. Over residues 442-488 (PNTTTGLPSSTHVPTNLTAPASTGPTVSTADVTSPTPAGTTSGASPV) the composition is skewed to polar residues. Residues 507 to 595 (TSPTSAVTTP…PTPNATSPTV (89 aa)) show a composition bias toward low complexity. Positions 596-637 (GETSPQANTTNHTLGGTSSTPVVTSPPKNATSAVTTGQHNIT) are enriched in polar residues. The span at 638–660 (SSSTSSMSLRPSSISETLSPSTS) shows a compositional bias: low complexity. N662 and N680 each carry an N-linked (GlcNAc...) asparagine; by host glycan. Residues 684 to 699 (VTPASTSTHHVSTSSP) show a composition bias toward low complexity. Positions 704–720 (GTTSQASGPGNSSTSTK) are enriched in polar residues. N-linked (GlcNAc...) asparagine; by host glycosylation is found at N714, N725, N734, and N759. Over residues 733-760 (KNATSPQAPSGQKTAVPTVTSTGGKANS) the composition is skewed to polar residues. Low complexity predominate over residues 761 to 771 (TTGGKHTTGHG). Positions 773–806 (RTSTEPTTDYGGDSTTPRTRYNATTYLPPSTSSK) are enriched in polar residues. N-linked (GlcNAc...) asparagine; by host glycans are attached at residues N794 and N837. A helical membrane pass occupies residues 840 to 860 (MLVLQWASLAVLTLLLLLVMA). Over 861–886 (DCAFRRNLSTSHTYTTPPYDDAETYV) the chain is Intravirion.

It belongs to the Epstein-Barr GP350 family. In terms of assembly, interacts with host CR2. In terms of processing, extensively glycosylated.

The protein resides in the virion membrane. Its subcellular location is the host membrane. Initiates virion attachment to host B-lymphocyte cell, leading to virus entry. Acts by binding to host CR2 at the surface of B-lymphocytes, facilitating the binding of viral glycoprotein gp42 to HLA class II molecules. Attachment triggers virion-host membrane fusion and invasion of the host cell. In Homo sapiens (Human), this protein is Envelope glycoprotein GP350.